Consider the following 334-residue polypeptide: Nucleoid-associated protein YPN_2714 (334 aa).

It belongs to the YejK family.

The protein localises to the cytoplasm. The protein resides in the nucleoid. This chain is Nucleoid-associated protein YPN_2714, found in Yersinia pestis bv. Antiqua (strain Nepal516).